Consider the following 150-residue polypeptide: Large ribosomal subunit protein bL9 (150 aa).

Belongs to the bacterial ribosomal protein bL9 family.

Its function is as follows. Binds to the 23S rRNA. This chain is Large ribosomal subunit protein bL9, found in Paraburkholderia phymatum (strain DSM 17167 / CIP 108236 / LMG 21445 / STM815) (Burkholderia phymatum).